We begin with the raw amino-acid sequence, 94 residues long: Large ribosomal subunit protein uL23 (94 aa).

Belongs to the universal ribosomal protein uL23 family. In terms of assembly, part of the 50S ribosomal subunit. Contacts protein L29, and trigger factor when it is bound to the ribosome.

Its function is as follows. One of the early assembly proteins it binds 23S rRNA. One of the proteins that surrounds the polypeptide exit tunnel on the outside of the ribosome. Forms the main docking site for trigger factor binding to the ribosome. In Symbiobacterium thermophilum (strain DSM 24528 / JCM 14929 / IAM 14863 / T), this protein is Large ribosomal subunit protein uL23.